A 623-amino-acid polypeptide reads, in one-letter code: Chaperone protein HtpG (623 aa).

Residues Met-1 to Arg-336 form an a; substrate-binding region. The tract at residues Glu-337–Arg-546 is b. The interval Leu-547–Glu-623 is c.

It belongs to the heat shock protein 90 family. In terms of assembly, homodimer.

The protein localises to the cytoplasm. In terms of biological role, molecular chaperone. Has ATPase activity. This Gluconobacter oxydans (strain 621H) (Gluconobacter suboxydans) protein is Chaperone protein HtpG.